A 149-amino-acid polypeptide reads, in one-letter code: Large ribosomal subunit protein uL13 (149 aa).

This sequence belongs to the universal ribosomal protein uL13 family. As to quaternary structure, part of the 50S ribosomal subunit.

Functionally, this protein is one of the early assembly proteins of the 50S ribosomal subunit, although it is not seen to bind rRNA by itself. It is important during the early stages of 50S assembly. This is Large ribosomal subunit protein uL13 from Pelodictyon phaeoclathratiforme (strain DSM 5477 / BU-1).